The sequence spans 119 residues: Large ribosomal subunit protein uL22 (119 aa).

It belongs to the universal ribosomal protein uL22 family. As to quaternary structure, part of the 50S ribosomal subunit.

In terms of biological role, this protein binds specifically to 23S rRNA; its binding is stimulated by other ribosomal proteins, e.g. L4, L17, and L20. It is important during the early stages of 50S assembly. It makes multiple contacts with different domains of the 23S rRNA in the assembled 50S subunit and ribosome. The globular domain of the protein is located near the polypeptide exit tunnel on the outside of the subunit, while an extended beta-hairpin is found that lines the wall of the exit tunnel in the center of the 70S ribosome. This Bifidobacterium longum (strain DJO10A) protein is Large ribosomal subunit protein uL22.